We begin with the raw amino-acid sequence, 1360 residues long: Lysine-specific demethylase REF6 (1360 aa).

Ala-2 bears the N-acetylalanine mark. In terms of domain architecture, JmjN spans 20–61; it reads APEFRPTLAEFQDPIAYILKIEEEASRYGICKILPPLPPPSK. Positions 203-369 constitute a JmjC domain; the sequence is ETAWNMRAMS…MAKDAAIRRA (167 aa). The Fe cation site is built by His-246, Glu-248, and His-337. The tract at residues 652 to 698 is disordered; sequence YGDSSDSEEEDQKGLVTPSSKGETKTYDQEGSDGHEEARDGRTSDFN. Positions 673 to 694 are enriched in basic and acidic residues; it reads GETKTYDQEGSDGHEEARDGRT. A Nuclear localization signal motif is present at residues 944-951; sequence CRKRKIRA. 4 disordered regions span residues 955–1012, 1044–1081, 1133–1155, and 1172–1238; these read PRKK…DPHK, AASE…SQQT, TGKR…QSSR, and EELD…NEEE. Composition is skewed to polar residues over residues 994-1008 and 1046-1057; these read ETGN…NQMS and SESSMENGSQHS. Residues 1136–1147 are compositionally biased toward basic residues; it reads RQTRSTAKRIAK. Residues 1225-1238 show a composition bias toward acidic residues; it reads EKEEEEEEEENEEE. The segment at 1243–1266 adopts a C2H2-type 1; degenerate zinc-finger fold; that stretch reads YQCNMEGCTMSFSSEKQLMLHKRN. Positions 1245, 1250, 1263, 1268, 1273, 1280, 1286, 1290, 1298, 1303, 1316, 1320, 1328, 1333, 1346, and 1352 each coordinate Zn(2+). 3 C2H2-type zinc fingers span residues 1266 to 1290, 1296 to 1320, and 1326 to 1352; these read NICP…QRVH, LKCP…IRVH, and YVCA…KTGH. The segment at 1275-1348 is DNA-binding; that stretch reads KNFFSHKYLV…FVSDFSRHKR (74 aa).

It belongs to the JHDM3 histone demethylase family. In terms of assembly, forms homooligomers. Interacts with BZR2 (via N-terminus). Interacts with BRM in the SWI/SNF complex. Interacts (via N-terminus) with NFYC9. Associates with INO80. In terms of tissue distribution, highly expressed in the shoot apical meristem and primary and secondary root tips, and lower expression in cotyledons, leaves and root axis along vascular tissues. Detected in inflorescences, stems and siliques. Present in seeds.

The protein localises to the nucleus. The catalysed reaction is N(6),N(6),N(6)-trimethyl-L-lysyl(27)-[histone H3] + 2-oxoglutarate + O2 = N(6),N(6)-dimethyl-L-lysyl(27)-[histone H3] + formaldehyde + succinate + CO2. It carries out the reaction N(6),N(6)-dimethyl-L-lysyl(27)-[histone H3] + 2-oxoglutarate + O2 = N(6)-methyl-L-lysyl(27)-[histone H3] + formaldehyde + succinate + CO2. Its function is as follows. Histone demethylase that demethylates 'Lys-27' (H3K27me) of histone H3, thus acting as a positive regulator of gene expression. Demethylates both tri- (H3K27me3) and di-methylated (H3K27me2) H3K27me. Also demethylates H3K4me3/2 and H3K36me3/2 in an in vitro assay. Involved in the transcriptional regulation of hundreds of genes regulating developmental patterning and responses to various stimuli. Binds DNA via its four zinc fingers in a sequence-specific manner, 5'-CTCTG(C/T)T(C/T)-3' (5'-CTCTGYTY-3'), with a preference for hypo-methylated status (e.g. cytosine methylation), to promote the demethylation of H3K27me3 and recruit the chromatin remodeler BRM in order to activate gene expression. Participates in the regulation of organ boundary formation. Bind mostly motifs located in active chromatin states which are depleted for heterochromatic modifications. Involved in the regulation of flowering time by repressing FLOWERING LOCUS C (FLC) expression. Stimulates lateral roots formation (e.g. primordium initiation and emergence) via the epigenetic de-repression of PIN genes such as PIN1, PIN3 and PIN7 directly by modulating the methylation status of their loci. Interacts with the NF-Y complex to regulate SOC1. Mediates the recruitment of BRM to its target loci. Together with EEN, involved in the epigenetic chromatin-dependent regulatory mechanism that monitors the expression of the essential multifunctional plant stress regulator EIN2 via H3K27me3 repressive histone demethylation and histone variant H2A.Z eviction, thus modulating responses to ethylene (ET), especially during embryogenesis. Eluviates seed dormancy by triggering abscisic acid (ABA) catabolism in seeds via the induction of CYP707A1 and CYP707A3 expression, genes involved in ABA degradation; binds directly to CYP707A1 and CYP707A3 loci to reduce their H3K27me3 levels in developing siliques. Required for systemic acquired resistance (SAR) toward pathogenic bacteria (e.g. Pseudomonas syringae pv tomato DC3000 (avrPto)). Together with FLD and MSI4/FVE, contributes to dehydroabietinal-dependent (DA, a diterpenoid tricyclic diterpene) activation of flowering ans SAR. Binds to the HSFA2 chromatin region to alleviate H3K27me3 repressive marks and trigger its expression in response to heat in a BRM-dependent manner. Involved in the mechanisms necessary for quick response to heat and subsequent heritable transgenerational memory of heat acclimation (global warming) such as early flowering and attenuated immunity; this process includes epigenetic regulation as well as post-transcriptional gene silencing (PTGS). In response to heat, HSFA2 is activated and promotes the expression of REF6 which in turn derepresses HSFA2, thus establishing a heritable feedback loop able to trigger SGIP1 and subsequent SGIP1-mediated SGS3 degradation; this prevents the biosynthesis of trans-acting siRNA (tasiRNA) and leads to the release of HTT5, which drives early flowering but attenuates immunity. Functionally, involved in the maintenance of H3K27me1 histone marks on euchromatin in a PRC2-dependent manner, to maintain low-level basal expression of corresponding genes. Together with ELF6, required for H3K27me3 resetting (especially in constitutive heterochromatin within the pericentromeric regions) and transgenerational inheritance of histone marks, thus acting in safeguarding genome and epigenome integrity during sexual reproduction. The sequence is that of Lysine-specific demethylase REF6 from Arabidopsis thaliana (Mouse-ear cress).